A 233-amino-acid polypeptide reads, in one-letter code: Purine nucleoside phosphorylase DeoD-type (233 aa).

An a purine D-ribonucleoside-binding site is contributed by histidine 4. Residues glycine 20, arginine 24, arginine 43, and 87–90 each bind phosphate; that span reads RIGT. A purine D-ribonucleoside is bound by residues 179–181 and 203–204; these read EME and SD. The active-site Proton donor is the aspartate 204.

Belongs to the PNP/UDP phosphorylase family. As to quaternary structure, homohexamer; trimer of homodimers.

The catalysed reaction is a purine D-ribonucleoside + phosphate = a purine nucleobase + alpha-D-ribose 1-phosphate. The enzyme catalyses a purine 2'-deoxy-D-ribonucleoside + phosphate = a purine nucleobase + 2-deoxy-alpha-D-ribose 1-phosphate. Catalyzes the reversible phosphorolytic breakdown of the N-glycosidic bond in the beta-(deoxy)ribonucleoside molecules, with the formation of the corresponding free purine bases and pentose-1-phosphate. The protein is Purine nucleoside phosphorylase DeoD-type of Helicobacter acinonychis (strain Sheeba).